The chain runs to 1690 residues: Trinucleotide repeat-containing gene 6C protein (1690 aa).

Composition is skewed to polar residues over residues 1-12, 19-36, and 160-183; these read MATGSAQSSFPS, GSHG…NQSA, and AEPQ…NTDG. Disordered regions lie at residues 1–42, 158–202, 226–848, and 863–928; these read MATG…AGGT, ESAE…AMQT, PGAN…EPVV, and CKPA…TPGK. The segment at 1–921 is sufficient for interaction with argonaute family proteins; that stretch reads MATGSAQSSF…GNTSKKGLQK (921 aa). Low complexity predominate over residues 184–198; sequence PNNTNPMNSSPNPIN. Residues 255 to 288 are compositionally biased toward polar residues; that stretch reads NPATGSTNCGFSQGNGDTVNSALSAKQNGSSSAV. Residue Arg313 is modified to Omega-N-methylarginine. Polar residues predominate over residues 362 to 374; the sequence is GWDSASAASQTPA. A compositionally biased stretch (low complexity) spans 384–404; the sequence is SWAKATSSGTTASEGSSDGSG. Over residues 415–426 the composition is skewed to basic and acidic residues; it reads GTGEGRRRDKGV. Residues 444–459 show a composition bias toward polar residues; sequence LSNSGWGQTPVKQNTA. A compositionally biased stretch (basic and acidic residues) spans 464–474; that stretch reads ESPRSERKNDN. A Phosphoserine modification is found at Ser465. Polar residues-rich tracts occupy residues 482–510, 519–530, 540–551, 644–656, and 663–678; these read IATQ…SGWV, ANTSWGDSNNKA, SISSTAVNNAAA, GTNA…TNWG, and PQQN…NVSN. Ser714 is subject to Phosphoserine. A compositionally biased stretch (low complexity) spans 754-771; sequence SSTTAPATPTTPTSSSTT. Phosphothreonine is present on Thr776. Residues 778-788 are compositionally biased toward polar residues; the sequence is PSHQAGTQLNR. Over residues 901–915 the composition is skewed to low complexity; it reads SQESSSSCSSWGNTS. A UBA domain is found at 928-973; sequence KQDEAWIMSRLIKQLTDMGFPREPAEEALKSNSMNLDQAMSALLEK. Residue Ser1006 is modified to Phosphoserine. A coiled-coil region spans residues 1156–1214; sequence QLQLAYQRLQIQQQMLQAQRNVSGPMRQQEQQVARTITNLQQQIQQHQRQLAQALLVKQ. Disordered regions lie at residues 1212–1337, 1351–1380, 1397–1421, 1441–1486, and 1600–1625; these read VKQP…PPGK, QNSE…ISNG, GLQN…PTIN, IKST…PSST, and PPTS…THGL. The segment covering 1214–1223 has biased composition (pro residues); it reads QPPPPPPPPH. Residues 1260 to 1690 form a silencing domain; interaction with CNOT1 and PAN3 region; sequence NTFAPYPLAG…PGDLLSGESI (431 aa). Residues 1272–1321 are compositionally biased toward polar residues; sequence PNMNVNSIDMSSGLSVKDPSQSQSRLPQWTHPNSMGNLSSAASPLDQNPS. The tract at residues 1371–1417 is required for interaction with PABPC1; it reads KSDSDKISNGSSISWPPEFHPGVPWKGLQNIDPENDPDVTPGSVPTG. A sufficient for translational repression when tethered to a target mRNA region spans residues 1371–1690; it reads KSDSDKISNG…PGDLLSGESI (320 aa). Residues 1381 to 1399 are PABPC1-interacting motif-2 (PAM2); that stretch reads SSISWPPEFHPGVPWKGLQ. The segment covering 1441-1457 has biased composition (polar residues); that stretch reads IKSTWSSGPASHTQASL. Positions 1565–1632 constitute an RRM domain; the sequence is AQKSLHMCVL…HGLVRSDTAH (68 aa). The tract at residues 1596–1690 is interaction with the CCR4-NOT complex; it reads GQALPPTSSW…PGDLLSGESI (95 aa). Over residues 1603 to 1613 the composition is skewed to low complexity; it reads SSWQSSSGGSQ.

Belongs to the GW182 family. Interacts with one or more of the argonaute family proteins AGO1, AGO2, AGO3 and AGO4. Interacts with CNOT1; the interaction mediates the association with the CCR4-NOT complex. Interacts with PAN3; the interaction mediates the association with the PAN complex.

Its function is as follows. Plays a role in RNA-mediated gene silencing by micro-RNAs (miRNAs). Required for miRNA-dependent translational repression of complementary mRNAs by argonaute family proteins As scaffoldng protein associates with argonaute proteins bound to partially complementary mRNAs and simultaneously can recruit CCR4-NOT and PAN deadenylase complexes. In Mus musculus (Mouse), this protein is Trinucleotide repeat-containing gene 6C protein (Tnrc6c).